A 177-amino-acid polypeptide reads, in one-letter code: ADP-ribose 1''-phosphate phosphatase (177 aa).

The region spanning methionine 1–leucine 177 is the Macro domain. Substrate-binding positions include glycine 9–isoleucine 11, serine 24–asparagine 26, tryptophan 31–alanine 36, and isoleucine 147–glycine 153.

Belongs to the POA1 family.

The catalysed reaction is ADP-alpha-D-ribose 1''-phosphate + H2O = ADP-D-ribose + phosphate. Highly specific phosphatase involved in the metabolism of ADP-ribose 1''-phosphate (Appr1p) which is produced as a consequence of tRNA splicing. Removes ADP-ribose from glutamate residues in proteins bearing a single ADP-ribose moiety. Inactive towards proteins bearing poly-ADP-ribose. This is ADP-ribose 1''-phosphate phosphatase (POA1) from Saccharomyces cerevisiae (strain YJM789) (Baker's yeast).